Consider the following 67-residue polypeptide: Penaeidin-4d (67 aa).

The first 19 residues, 1–19 (MRLLVCLVFLASFAMVCQG), serve as a signal peptide directing secretion. 3 cysteine pairs are disulfide-bonded: Cys-42/Cys-56, Cys-45/Cys-63, and Cys-57/Cys-64. At Leu-66 the chain carries Leucine amide.

This sequence belongs to the penaeidin family.

The protein localises to the cytoplasmic granule. Its function is as follows. Antibacterial and antifungal activity. Presents chitin-binding activity. The protein is Penaeidin-4d of Penaeus setiferus (Atlantic white shrimp).